An 87-amino-acid chain; its full sequence is Sodium channel neurotoxin MeuNaTxalpha-5* (87 aa).

The first 19 residues, 1-19 (MNYLILISFALLVITGVES), serve as a signal peptide directing secretion. Residues 21 to 85 (RDAYIAKPHN…VPIRIPGKCH (65 aa)) form the LCN-type CS-alpha/beta domain. 4 disulfides stabilise this stretch: C31-C84, C35-C57, C43-C67, and C47-C69. A propeptide spans 86–87 (RR) (removed by a carboxypeptidase).

This sequence belongs to the long (4 C-C) scorpion toxin superfamily. Sodium channel inhibitor family. Alpha subfamily. Expressed by the venom gland.

The protein localises to the secreted. Its function is as follows. Alpha toxins bind voltage-independently at site-3 of sodium channels (Nav) and inhibit the inactivation of the activated channels, thereby blocking neuronal transmission. This toxin inhibits inactivation of Nav1.6/SCN8A (EC(50)=790 nM) and drosophila DmNav1 (EC(50)=280 nM). The toxin (1 uM) does not significantly shift the midpoint of activation at the two channels, but induces a significant depolarizing shift in the V(1/2) of inactivation of the channels. Has antimicrobial activity. The protein is Sodium channel neurotoxin MeuNaTxalpha-5* of Mesobuthus eupeus (Lesser Asian scorpion).